Reading from the N-terminus, the 548-residue chain is Membrane protein insertase YidC (548 aa).

Residues 6-26 (NLLVIALLFVSFMIWQAWEQD) form a helical membrane-spanning segment. Residues 28 to 56 (NPQPQTQQTTQTTTTAAGSAADQGVPASG) form a disordered region. The segment covering 29-42 (PQPQTQQTTQTTTT) has biased composition (low complexity). 4 helical membrane passes run 350-370 (FVGNWGFSIIIITFIVRGIMY), 424-444 (FPLIIQMPIFLALYYMLMGSI), 458-478 (LSAQDPYYILPILMGVTMFFI), and 499-519 (PVIFTVFFLWFPSGLVLYYIV).

It belongs to the OXA1/ALB3/YidC family. Type 1 subfamily. Interacts with the Sec translocase complex via SecD. Specifically interacts with transmembrane segments of nascent integral membrane proteins during membrane integration.

Its subcellular location is the cell inner membrane. Required for the insertion and/or proper folding and/or complex formation of integral membrane proteins into the membrane. Involved in integration of membrane proteins that insert both dependently and independently of the Sec translocase complex, as well as at least some lipoproteins. Aids folding of multispanning membrane proteins. This is Membrane protein insertase YidC from Salmonella newport (strain SL254).